We begin with the raw amino-acid sequence, 245 residues long: Probable phosphatase KPN78578_10290 (245 aa).

Zn(2+) contacts are provided by His-7, His-9, His-15, His-40, Glu-73, His-101, His-131, Asp-192, and His-194.

The protein belongs to the PHP family. In terms of assembly, homotrimer. Zn(2+) is required as a cofactor.

This is Probable phosphatase KPN78578_10290 from Klebsiella pneumoniae subsp. pneumoniae (strain ATCC 700721 / MGH 78578).